The following is a 563-amino-acid chain: NAD-dependent malic enzyme (563 aa).

Tyr-101 acts as the Proton donor in catalysis. Arg-154 serves as a coordination point for NAD(+). Lys-172 acts as the Proton acceptor in catalysis. The a divalent metal cation site is built by Glu-243, Asp-244, and Asp-267. Residues Asp-267 and Asn-416 each contribute to the NAD(+) site.

Belongs to the malic enzymes family. In terms of assembly, homotetramer. The cofactor is Mg(2+). Mn(2+) is required as a cofactor.

It carries out the reaction (S)-malate + NAD(+) = pyruvate + CO2 + NADH. It catalyses the reaction oxaloacetate + H(+) = pyruvate + CO2. The chain is NAD-dependent malic enzyme from Pseudomonas savastanoi pv. phaseolicola (strain 1448A / Race 6) (Pseudomonas syringae pv. phaseolicola (strain 1448A / Race 6)).